The primary structure comprises 249 residues: Probable septum site-determining protein MinC (249 aa).

Residues S89–I130 are disordered. Residues P119–P129 are compositionally biased toward low complexity.

The protein belongs to the MinC family. As to quaternary structure, interacts with MinD and FtsZ.

Cell division inhibitor that blocks the formation of polar Z ring septums. Rapidly oscillates between the poles of the cell to destabilize FtsZ filaments that have formed before they mature into polar Z rings. Prevents FtsZ polymerization. The polypeptide is Probable septum site-determining protein MinC (Rhizobium meliloti (strain 1021) (Ensifer meliloti)).